Consider the following 173-residue polypeptide: Peptidoglycan-associated lipoprotein (173 aa).

The signal sequence occupies residues 1–21 (MKSKKIFKILTLLLPMITTFS). C22 carries the N-palmitoyl cysteine lipid modification. C22 carries S-diacylglycerol cysteine lipidation. One can recognise an OmpA-like domain in the interval 59–173 (ETLEKLKKGN…KNRRSVIIYQ (115 aa)).

This sequence belongs to the Pal lipoprotein family.

The protein resides in the cell outer membrane. The protein is Peptidoglycan-associated lipoprotein of Buchnera aphidicola subsp. Baizongia pistaciae (strain Bp).